An 874-amino-acid chain; its full sequence is Ectonucleotide pyrophosphatase/phosphodiesterase family member 3 (874 aa).

Over 1 to 11 (MQSTLNLSTEE) the chain is Cytoplasmic. A helical; Signal-anchor for type II membrane protein transmembrane segment spans residues 12–30 (PVKRNTVKKYKIICIVLLI). The Extracellular portion of the chain corresponds to 31–874 (LLVAVSLALG…TYLPVFETVI (844 aa)). SMB domains follow at residues 50 to 93 (EQGS…VQST) and 94 to 138 (QIWT…GETS). Intrachain disulfides connect Cys-54/Cys-71, Cys-58/Cys-89, Cys-69/Cys-82, Cys-75/Cys-81, Cys-98/Cys-115, Cys-103/Cys-133, Cys-113/Cys-126, Cys-119/Cys-125, Cys-144/Cys-190, and Cys-152/Cys-364. The Cell attachment site motif lies at 78–80 (RGD). Residues 160 to 544 (PVILFSMDGF…HGSLNHLLKV (385 aa)) form a phosphodiesterase region. Asp-167 provides a ligand contact to Zn(2+). Lys-204 is an ATP binding site. A Zn(2+)-binding site is contributed by Thr-205. Thr-205 acts as the Nucleophile in catalysis. Asn-226 lines the ATP pocket. Asn-236 carries N-linked (GlcNAc...) asparagine glycosylation. Position 275 (Asp-275) interacts with ATP. A glycan (N-linked (GlcNAc...) asparagine) is linked at Asn-279. Residue Tyr-289 coordinates ATP. Asn-290 carries N-linked (GlcNAc...) asparagine glycosylation. 4 residues coordinate Zn(2+): Asp-325, His-329, Asp-372, and His-373. Cystine bridges form between Cys-380-Cys-477, Cys-428-Cys-817, Cys-561-Cys-622, Cys-574-Cys-678, Cys-576-Cys-663, and Cys-786-Cys-796. Asn-425 carries N-linked (GlcNAc...) asparagine glycosylation. His-482 is a binding site for Zn(2+). Asn-532 carries N-linked (GlcNAc...) asparagine glycosylation. The interval 581–874 (TNSDLERVNQ…TYLPVFETVI (294 aa)) is nuclease. Asn-677, Asn-686, and Asn-698 each carry an N-linked (GlcNAc...) asparagine glycan. Ca(2+)-binding residues include Asp-751, Asp-755, His-757, and Asp-759. N-linked (GlcNAc...) asparagine glycosylation is found at Asn-770, Asn-788, and Asn-820.

The protein belongs to the nucleotide pyrophosphatase/phosphodiesterase family. As to quaternary structure, monomer and homodimer. Zn(2+) is required as a cofactor. N-glycosylated. N-glycosylation is necessary for normal transport to the cell membrane, but is not the apical targeting signal.

Its subcellular location is the cell membrane. The protein resides in the apical cell membrane. It is found in the secreted. The enzyme catalyses a ribonucleoside 5'-triphosphate + H2O = a ribonucleoside 5'-phosphate + diphosphate + H(+). It catalyses the reaction ATP + H2O = AMP + diphosphate + H(+). The catalysed reaction is CTP + H2O = CMP + diphosphate + H(+). It carries out the reaction GTP + H2O = GMP + diphosphate + H(+). The enzyme catalyses UTP + H2O = UMP + diphosphate + H(+). It catalyses the reaction UDP-N-acetyl-alpha-D-glucosamine + H2O = N-acetyl-alpha-D-glucosamine 1-phosphate + UMP + 2 H(+). The catalysed reaction is P(1),P(3)-bis(5'-adenosyl) triphosphate + H2O = AMP + ADP + 2 H(+). It carries out the reaction P(1),P(4)-bis(5'-adenosyl) tetraphosphate + H2O = AMP + ATP + 2 H(+). The enzyme catalyses P(1),P(5)-bis(5'-adenosyl) pentaphosphate + H2O = adenosine 5'-tetraphosphate + AMP + 2 H(+). It catalyses the reaction P(1),P(4)-bis(5'-guanosyl) tetraphosphate + H2O = GMP + GTP + 2 H(+). The catalysed reaction is Hydrolytically removes 5'-nucleotides successively from the 3'-hydroxy termini of 3'-hydroxy-terminated oligonucleotides.. Its function is as follows. Hydrolase that metabolizes extracellular nucleotides, including ATP, GTP, UTP and CTP. Limits mast cells and basophils response during inflammation and during the chronic phases of allergic responses by eliminating extracellular ATP, a signaling molecule activating these cells in an autocrine manner. Metabolizes extracellular ATP in the lumen of the small intestine, and thereby prevents ATP-induced apoptosis of intestinal plasmacytoid dendritic cells. Has a broad specificity and can also hydrolyze UDP-GlcNAc into UMP and GlcNAc-1-phosphate and potentially several other intracellular nucleotide sugars, including UDP-GalNAc, CMP-NeuAc, GDP-Fuc, and UDP-GlcA. Thereby, could modulate glycan biosynthesis and protein glycosylation. Can hydrolyze extracellular dinucleoside polyphosphates, including the vasoactive adenosine polyphosphates as well. In addition, displays an alkaline phosphodiesterase activity in vitro. In Bos taurus (Bovine), this protein is Ectonucleotide pyrophosphatase/phosphodiesterase family member 3 (ENPP3).